Here is a 259-residue protein sequence, read N- to C-terminus: Probable kinetochore protein spc25 (259 aa).

The span at 1-20 (MSRKSVMSSTFEPSLSTSRQ) shows a compositional bias: polar residues. Residues 1–25 (MSRKSVMSSTFEPSLSTSRQPLGPS) are disordered. Residues 59–162 (RKRVLEERNQ…HAAQLEAQAR (104 aa)) are a coiled coil.

This sequence belongs to the SPC25 family. In terms of assembly, component of the NDC80 complex, which consists of kpr-1/ndc80, kpr-2/nuf2, kpr-3/spc24 and kpr-4/spc25.

It localises to the nucleus. The protein resides in the chromosome. The protein localises to the centromere. It is found in the kinetochore. In terms of biological role, acts as a component of the essential kinetochore-associated NDC80 complex, which is required for chromosome segregation and spindle checkpoint activity. This chain is Probable kinetochore protein spc25 (kpr-4), found in Neurospora crassa (strain ATCC 24698 / 74-OR23-1A / CBS 708.71 / DSM 1257 / FGSC 987).